Consider the following 745-residue polypeptide: MEVMNLMEQPIKVTEWQQTYTYDSGIHSGANTCVPSVSSKGIMEEDEACGRQYTLKKTTTYTQGVPPSQGDLEYQMSTTARAKRVREAMCPGVSGEDSSLLLATQVEGQATNLQRLAEPSQLLKSAIVHLINYQDDAELATRALPELTKLLNDEDPVVVTKAAMIVNQLSKKEASRRALMGSPQLVAAVVRTMQNTSDLDTARCTTSILHNLSHHREGLLAIFKSGGIPALVRMLSSPVESVLFYAITTLHNLLLYQEGAKMAVRLADGLQKMVPLLNKNNPKFLAITTDCLQLLAYGNQESKLIILANGGPQALVQIMRNYSYEKLLWTTSRVLKVLSVCPSNKPAIVEAGGMQALGKHLTSNSPRLVQNCLWTLRNLSDVATKQEGLESVLKILVNQLSVDDVNVLTCATGTLSNLTCNNSKNKTLVTQNSGVEALIHAILRAGDKDDITEPAVCALRHLTSRHPEAEMAQNSVRLNYGIPAIVKLLNQPNQWPLVKATIGLIRNLALCPANHAPLQEAAVIPRLVQLLVKAHQDAQRHVAAGTQQPYTDGVRMEEIVEGCTGALHILARDPMNRMEIFRLNTIPLFVQLLYSSVENIQRVAAGVLCELAQDKEAADAIDAEGASAPLMELLHSRNEGTATYAAAVLFRISEDKNPDYRKRVSVELTNSLFKHDPAAWEAAQSMIPINEPYGDDMDATYRPMYSSDVPLDPLEMHMDMDGDYPIDTYSDGLRPPYPTADHMLA.

Methionine 1 is subject to N-acetylmethionine. The O-linked (GlcNAc) threonine glycan is linked to threonine 14. Serine 99 and serine 125 each carry phosphoserine. 12 ARM repeats span residues 132–171, 172–215, 216–255, 258–297, 298–341, 342–381, 383–420, 423–464, 470–510, 512–551, 574–613, and 615–661; these read NYQDDAELATRALPELTKLLNDEDPVVVTKAAMIVNQLSK, KEAS…LSHH, REGLLAIFKSGGIPALVRMLSSPVESVLFYAITTLHNLLL, EGAKMAVRLADGLQKMVPLLNKNNPKFLAITTDCLQLLAY, GNQE…LSVC, PSNKPAIVEAGGMQALGKHLTSNSPRLVQNCLWTLRNLSD, ATKQEGLESVLKILVNQLSVDDVNVLTCATGTLSNLTC, SKNK…HLTS, EMAQ…NLAL, PANHAPLQEAAVIPRLVQLLVKAHQDAQRHVAAGTQQPYT, PMNRMEIFRLNTIPLFVQLLYSSVENIQRVAAGVLCELAQ, and KEAA…PDYR. Positions 132-297 are interaction with DSC1 and DSG1; it reads NYQDDAELAT…TTDCLQLLAY (166 aa). At serine 182 the chain carries Phosphoserine. The interval 574-661 is interaction with DSC1; the sequence is PMNRMEIFRL…ISEDKNPDYR (88 aa). Phosphoserine occurs at positions 665 and 730.

Belongs to the beta-catenin family. As to quaternary structure, homodimer. Component of an E-cadherin/catenin adhesion complex composed of at least E-cadherin/CDH1 and gamma-catenin/JUP, and possibly alpha-catenin/CTNNA1; the complex is located to adherens junctions. The stable association of CTNNA1 is controversial as CTNNA1 was shown not to bind to F-actin when assembled in the complex. Interacts with MUC1. Interacts with CAV1. Interacts with PTPRJ. Interacts with DSG1. Interacts with DSC1 and DSC2. Interacts with PKP2. Interacts with PKP3 (via N-terminus); the interaction is required for PKP3 localization to desmosome cell-cell junctions. Interacts with DSG4. May be phosphorylated by FER. In terms of tissue distribution, expressed in the heart (at protein level).

It localises to the cell junction. Its subcellular location is the adherens junction. The protein resides in the desmosome. The protein localises to the cytoplasm. It is found in the cytoskeleton. It localises to the cell membrane. Its subcellular location is the nucleus. Functionally, common junctional plaque protein. The membrane-associated plaques are architectural elements in an important strategic position to influence the arrangement and function of both the cytoskeleton and the cells within the tissue. The presence of plakoglobin in both the desmosomes and in the intermediate junctions suggests that it plays a central role in the structure and function of submembranous plaques. Acts as a substrate for VE-PTP and is required by it to stimulate VE-cadherin function in endothelial cells. Can replace beta-catenin in E-cadherin/catenin adhesion complexes which are proposed to couple cadherins to the actin cytoskeleton. This is Junction plakoglobin from Homo sapiens (Human).